Reading from the N-terminus, the 464-residue chain is Kynurenine 3-monooxygenase (464 aa).

This sequence belongs to the aromatic-ring hydroxylase family. KMO subfamily. FAD is required as a cofactor.

The enzyme catalyses L-kynurenine + NADPH + O2 + H(+) = 3-hydroxy-L-kynurenine + NADP(+) + H2O. It functions in the pathway cofactor biosynthesis; NAD(+) biosynthesis; quinolinate from L-kynurenine: step 1/3. Catalyzes the hydroxylation of L-kynurenine (L-Kyn) to form 3-hydroxy-L-kynurenine (L-3OHKyn). Required for synthesis of quinolinic acid. The sequence is that of Kynurenine 3-monooxygenase from Myxococcus xanthus (strain DK1622).